The sequence spans 1775 residues: Atrochrysone carboxylic acid synthase (1775 aa).

One can recognise a Starter acyltransferase (SAT) domain in the interval 35–262 (LRRLQALSKD…YAKWASLPIF (228 aa)). Residues 400–833 (DSKIAIVGMS…GGNTTMLLEE (434 aa)) form the Ketosynthase family 3 (KS3) domain. Residues C573, H708, and H750 each act as for beta-ketoacyl synthase activity in the active site. The region spanning 934-1244 (FAFTGQGAFY…ENNWNTLADS (311 aa)) is the Malonyl-CoA:ACP transacylase (MAT) domain. A product template (PT) domain region spans residues 1313–1631 (TSSIHQVLQE…RSLLPTFFSP (319 aa)). The N-terminal hotdog fold stretch occupies residues 1317 to 1451 (HQVLQEDVTG…SAVVEYGDAN (135 aa)). Residues 1317 to 1626 (HQVLQEDVTG…FRRFPRSLLP (310 aa)) form the PKS/mFAS DH domain. The active-site Proton acceptor; for dehydratase activity is the H1349. Residues 1480–1626 (AAVLPRNMAY…FRRFPRSLLP (147 aa)) are C-terminal hotdog fold. The active-site Proton donor; for dehydratase activity is the D1537. The segment at 1671 to 1697 (TAAPVPAPAPVPAKRAEPAPAAAQAAA) is disordered. The span at 1688–1697 (PAPAAAQAAA) shows a compositional bias: low complexity. The region spanning 1697–1774 (ATQNPTITGA…ELKTYIEETF (78 aa)) is the Carrier domain. S1734 is subject to O-(pantetheine 4'-phosphoryl)serine.

The enzyme catalyses holo-[ACP] + 8 malonyl-CoA + 8 H(+) = atrochrysone carboxyl-[ACP] + 8 CO2 + 8 CoA + 2 H2O. It participates in secondary metabolite biosynthesis. In terms of biological role, non-reducing polyketide synthase; part of the gene cluster that mediates the biosynthesis of physcion, a natural anthraquinone fungicide that can prevent plant fungal infections. The pathway begins with the polyketide synthase AcPKS that condenses 8 malonyl-CoA units to synthesize atrochrysone thioester which is released from the synthase by the atrochrysone carboxyl ACP thioesterase AcTE that breaks the thioester bond and leads to free atrochrysone carboxylic acid. Spontaneous decarboxylation of atrochrysone carboxylic acid leads to the formation of atrochrysone. Then, atrochrysone undergoes spontaneous dehydration and oxidation, giving the products emodin anthrone and emodin. The O-methyltransferase AcOMT then methylates the C-6 hydroxyl of emodin to form physcion. The protein is Atrochrysone carboxylic acid synthase of Aspergillus chevalieri (Eurotium chevalieri).